A 75-amino-acid chain; its full sequence is Exodeoxyribonuclease 7 small subunit (75 aa).

This sequence belongs to the XseB family. As to quaternary structure, heterooligomer composed of large and small subunits.

It localises to the cytoplasm. It carries out the reaction Exonucleolytic cleavage in either 5'- to 3'- or 3'- to 5'-direction to yield nucleoside 5'-phosphates.. Its function is as follows. Bidirectionally degrades single-stranded DNA into large acid-insoluble oligonucleotides, which are then degraded further into small acid-soluble oligonucleotides. This is Exodeoxyribonuclease 7 small subunit from Geobacter sp. (strain M21).